A 1122-amino-acid polypeptide reads, in one-letter code: TSET complex member tstF (1122 aa).

Residues 88 to 126 (SSSASGINGTNNNNSGSNSSNNNNNNNGSLSNSPNNNNN) are compositionally biased toward low complexity. 2 disordered regions span residues 88-131 (SSSA…AFIG) and 178-215 (QTLHNRSPNNTIKLSPNSSNNDSLNNNNNNINNNSTNS). Residues 178–190 (QTLHNRSPNNTIK) show a composition bias toward polar residues. Residues 191-215 (LSPNSSNNDSLNNNNNNINNNSTNS) are compositionally biased toward low complexity. WD repeat units lie at residues 298–337 (FENKSPNSVEFFSNSPFVAFGGPDSMIRLWNTEKWEIEKQ), 342–381 (PKGTIVKLKAIEIEGEFLVSGGTDGFVCVWNVKTGSLATQ), and 383–422 (SKVHEIVDLSYDYVTGQVMALTQDRHIMIYDLNTLKEVSK). Residues 731–775 (NGSVGGSSSNNSANSNNSNNNNNNNNNNSNNSNNNNNSSQPILEP) form a disordered region.

As to quaternary structure, component of the TSET complex, a heterohexamer composed of tstA, tstB, tstC, tstD, tstE and tstF, which may act in plasma membrane turnover. tstA, tstB, tstC and tstD are likely to be the core complex members with tstE and tstF acting as associated scaffold proteins.

The chain is TSET complex member tstF from Dictyostelium discoideum (Social amoeba).